We begin with the raw amino-acid sequence, 270 residues long: 3-phenylpropionate-dihydrodiol/cinnamic acid-dihydrodiol dehydrogenase (270 aa).

10-34 provides a ligand contact to NAD(+); sequence FITGGGSGLGLALVERFIEEGAQVA. Ser-143 lines the substrate pocket. Residue Tyr-156 is the Proton acceptor of the active site.

It belongs to the short-chain dehydrogenases/reductases (SDR) family.

The enzyme catalyses 3-(cis-5,6-dihydroxycyclohexa-1,3-dien-1-yl)propanoate + NAD(+) = 3-(2,3-dihydroxyphenyl)propanoate + NADH + H(+). The catalysed reaction is (2E)-3-(cis-5,6-dihydroxycyclohexa-1,3-dien-1-yl)prop-2-enoate + NAD(+) = (2E)-3-(2,3-dihydroxyphenyl)prop-2-enoate + NADH + H(+). Its pathway is aromatic compound metabolism; 3-phenylpropanoate degradation. In terms of biological role, converts 3-phenylpropionate-dihydrodiol (PP-dihydrodiol) and cinnamic acid-dihydrodiol (CI-dihydrodiol) into 3-(2,3-dihydroxylphenyl)propanoic acid (DHPP) and 2,3-dihydroxicinnamic acid (DHCI), respectively. The chain is 3-phenylpropionate-dihydrodiol/cinnamic acid-dihydrodiol dehydrogenase from Shigella flexneri serotype 5b (strain 8401).